A 201-amino-acid polypeptide reads, in one-letter code: Translation initiation factor IF-3 (201 aa).

It belongs to the IF-3 family. In terms of assembly, monomer.

It is found in the cytoplasm. IF-3 binds to the 30S ribosomal subunit and shifts the equilibrium between 70S ribosomes and their 50S and 30S subunits in favor of the free subunits, thus enhancing the availability of 30S subunits on which protein synthesis initiation begins. The polypeptide is Translation initiation factor IF-3 (Prochlorococcus marinus (strain SARG / CCMP1375 / SS120)).